A 1000-amino-acid polypeptide reads, in one-letter code: Receptor-type tyrosine-protein kinase FLT3 (1000 aa).

Positions 1 to 27 (MRALAQRSDRRLLLLVVLSVMILETVT) are cleaved as a signal peptide. The Extracellular portion of the chain corresponds to 28-544 (NQDLPVIKCV…PFPFIQDNIS (517 aa)). 2 disulfide bridges follow: Cys-36/Cys-66 and Cys-104/Cys-115. Asn-44 carries N-linked (GlcNAc...) asparagine glycosylation. The segment at 45–67 (GSSAGKPSSYRMVRGSPEDLQCT) is disordered. N-linked (GlcNAc...) asparagine glycosylation is found at Asn-133 and Asn-152. 2 cysteine pairs are disulfide-bonded: Cys-200–Cys-207 and Cys-273–Cys-331. Residues 254–344 (PQSTLPQLFL…KHPSQSALVT (91 aa)) enclose the Ig-like C2-type domain. N-linked (GlcNAc...) asparagine glycosylation is found at Asn-307, Asn-324, and Asn-352. Intrachain disulfides connect Cys-369–Cys-408 and Cys-382–Cys-393. Residues Asn-445, Asn-474, Asn-503, and Asn-542 are each glycosylated (N-linked (GlcNAc...) asparagine). Residues 545 to 564 (FYATIGLCLPFIVVLIVLIC) traverse the membrane as a helical segment. Topologically, residues 565 to 992 (HKYKKQFRYE…GSEPPSPQAQ (428 aa)) are cytoplasmic. At Tyr-573 the chain carries Phosphotyrosine. The residue at position 575 (Ser-575) is a Phosphoserine. A phosphotyrosine; by autocatalysis mark is found at Tyr-590 and Tyr-592. The interval 592-598 (YVDFRDY) is important for normal regulation of the kinase activity and for maintaining the kinase in an inactive state in the absence of ligand binding. The residue at position 600 (Tyr-600) is a Phosphotyrosine. Positions 611 to 946 (LEFGKVLGSG…PSFPNLTSFL (336 aa)) constitute a Protein kinase domain. ATP-binding positions include 617–625 (LGSGAFGRV) and Lys-645. Tyr-727 is modified (phosphotyrosine; by autocatalysis). Ser-760 bears the Phosphoserine mark. Residues Tyr-769 and Tyr-796 each carry the phosphotyrosine modification. Asp-814 functions as the Proton acceptor in the catalytic mechanism. Position 845 is a phosphotyrosine; by autocatalysis (Tyr-845). Tyr-958 and Tyr-972 each carry phosphotyrosine. The segment at 968 to 1000 (HPSIYQNRRPLSREAGSEPPSPQAQVKIHRERS) is disordered. At Ser-1000 the chain carries Phosphoserine.

Belongs to the protein kinase superfamily. Tyr protein kinase family. CSF-1/PDGF receptor subfamily. As to quaternary structure, monomer in the absence of bound FLT3LG. Homodimer in the presence of bound FLT3LG. Interacts with FIZ1 following ligand activation. Interacts with FES, FER, LYN, FGR, HCK, SRC and GRB2. Interacts with PTPRJ/DEP-1 and PTPN11/SHP2. Interacts with RNF115 and RNF126. In terms of processing, N-glycosylated, contains complex N-glycans with sialic acid. Autophosphorylated on several tyrosine residues in response to FLT3LG binding. FLT3LG binding also increases phosphorylation of mutant kinases that are constitutively activated. Dephosphorylated by PTPRJ/DEP-1, PTPN1, PTPN6/SHP-1, and to a lesser degree by PTPN12. Dephosphorylation is important for export from the endoplasmic reticulum and location at the cell membrane. Post-translationally, rapidly ubiquitinated by UBE2L6 and the E3 ubiquitin-protein ligase SIAH1 after autophosphorylation, leading to its proteasomal degradation. Hematopoietic stem and progenitor cell-enriched populations. Found in brain, placenta and testis.

It localises to the membrane. It is found in the endoplasmic reticulum lumen. It carries out the reaction L-tyrosyl-[protein] + ATP = O-phospho-L-tyrosyl-[protein] + ADP + H(+). Its activity is regulated as follows. Present in an inactive conformation in the absence of bound ligand. FLT3LG binding leads to dimerization and activation by autophosphorylation. Functionally, tyrosine-protein kinase that acts as a cell-surface receptor for the cytokine FLT3LG and regulates differentiation, proliferation and survival of hematopoietic progenitor cells and of dendritic cells. Promotes phosphorylation of SHC1 and AKT1, and activation of the downstream effector MTOR. Promotes activation of RAS signaling and phosphorylation of downstream kinases, including MAPK1/ERK2 and/or MAPK3/ERK1. Promotes phosphorylation of FES, FER, PTPN6/SHP, PTPN11/SHP-2, PLCG1, and STAT5A and/or STAT5B. Activation of wild-type FLT3 causes only marginal activation of STAT5A or STAT5B. Mutations that cause constitutive kinase activity promote cell proliferation and resistance to apoptosis via the activation of multiple signaling pathways. This chain is Receptor-type tyrosine-protein kinase FLT3 (Flt3), found in Mus musculus (Mouse).